A 612-amino-acid polypeptide reads, in one-letter code: Sulfite reductase [NADPH] hemoprotein beta-component (612 aa).

Residues 1-26 form a disordered region; that stretch reads MDDHKPIETPDGPAVDTPGIGARRYE. Residues C469, C475, C514, and C518 each contribute to the [4Fe-4S] cluster site. C518 contacts siroheme.

It belongs to the nitrite and sulfite reductase 4Fe-4S domain family. Alpha(8)-beta(8). The alpha component is a flavoprotein, the beta component is a hemoprotein. Siroheme serves as cofactor. [4Fe-4S] cluster is required as a cofactor.

It carries out the reaction hydrogen sulfide + 3 NADP(+) + 3 H2O = sulfite + 3 NADPH + 4 H(+). It functions in the pathway sulfur metabolism; hydrogen sulfide biosynthesis; hydrogen sulfide from sulfite (NADPH route): step 1/1. In terms of biological role, component of the sulfite reductase complex that catalyzes the 6-electron reduction of sulfite to sulfide. This is one of several activities required for the biosynthesis of L-cysteine from sulfate. This is Sulfite reductase [NADPH] hemoprotein beta-component from Methylorubrum extorquens (strain PA1) (Methylobacterium extorquens).